A 74-amino-acid chain; its full sequence is Translation initiation factor IF-1 (74 aa).

Residues 1 to 72 (MSKEDAIEME…NKGRITYRLK (72 aa)) form the S1-like domain.

It belongs to the IF-1 family. As to quaternary structure, component of the 30S ribosomal translation pre-initiation complex which assembles on the 30S ribosome in the order IF-2 and IF-3, IF-1 and N-formylmethionyl-tRNA(fMet); mRNA recruitment can occur at any time during PIC assembly.

The protein localises to the cytoplasm. Functionally, one of the essential components for the initiation of protein synthesis. Stabilizes the binding of IF-2 and IF-3 on the 30S subunit to which N-formylmethionyl-tRNA(fMet) subsequently binds. Helps modulate mRNA selection, yielding the 30S pre-initiation complex (PIC). Upon addition of the 50S ribosomal subunit IF-1, IF-2 and IF-3 are released leaving the mature 70S translation initiation complex. This chain is Translation initiation factor IF-1, found in Synechococcus sp. (strain JA-2-3B'a(2-13)) (Cyanobacteria bacterium Yellowstone B-Prime).